The following is a 540-amino-acid chain: [Co(II) methylated amine-specific corrinoid protein] reductase (540 aa).

2 4Fe-4S ferredoxin-type domains span residues 471–500 (IILE…IVER) and 504–535 (RIAK…ITKL). Positions 480, 483, 486, 490, 513, 518, 521, and 525 each coordinate [4Fe-4S] cluster.

As to quaternary structure, monomer. It depends on [4Fe-4S] cluster as a cofactor.

It carries out the reaction 2 Co(II)-[methylamine-specific corrinoid protein] + AH2 + ATP + H2O = 2 Co(I)-[methylamine-specific corrinoid protein] + A + ADP + phosphate + 3 H(+). The catalysed reaction is 2 Co(II)-[dimethylamine-specific corrinoid protein] + AH2 + ATP + H2O = 2 Co(I)-[dimethylamine-specific corrinoid protein] + A + ADP + phosphate + 3 H(+). The enzyme catalyses 2 Co(II)-[trimethylamine-specific corrinoid protein] + AH2 + ATP + H2O = 2 Co(I)-[trimethylamine-specific corrinoid protein] + A + ADP + phosphate + 3 H(+). It participates in one-carbon metabolism; methanogenesis from methylamine. It functions in the pathway one-carbon metabolism; methanogenesis from dimethylamine. The protein operates within one-carbon metabolism; methanogenesis from trimethylamine. Reductase required for the activation of corrinoid-dependent methylamine methyltransferase reactions during methanogenesis. Mediates the ATP-dependent reduction of corrinoid proteins from the inactive cobalt(II) state to the active cobalt(I) state. Acts on the corrinoid proteins involved in methanogenesis from monomethylamine (MMA), dimethylamine (DMA) and trimethylamine (TMA), namely MtmC, MtbC and MttC, respectively. The protein is [Co(II) methylated amine-specific corrinoid protein] reductase of Methanosarcina barkeri.